A 315-amino-acid chain; its full sequence is DNA-directed RNA polymerase subunit alpha (315 aa).

The segment at 1–229 (MLDSKLKAPV…EHLTYFSNPQ (229 aa)) is alpha N-terminal domain (alpha-NTD). The interval 247–315 (EQEEELDLPL…LEKKGFTLKE (69 aa)) is alpha C-terminal domain (alpha-CTD).

The protein belongs to the RNA polymerase alpha chain family. Homodimer. The RNAP catalytic core consists of 2 alpha, 1 beta, 1 beta' and 1 omega subunit. When a sigma factor is associated with the core the holoenzyme is formed, which can initiate transcription.

The enzyme catalyses RNA(n) + a ribonucleoside 5'-triphosphate = RNA(n+1) + diphosphate. Functionally, DNA-dependent RNA polymerase catalyzes the transcription of DNA into RNA using the four ribonucleoside triphosphates as substrates. This chain is DNA-directed RNA polymerase subunit alpha, found in Thermus thermophilus (strain ATCC BAA-163 / DSM 7039 / HB27).